A 347-amino-acid polypeptide reads, in one-letter code: NADH-quinone oxidoreductase subunit H 1 (347 aa).

9 helical membrane-spanning segments follow: residues 13 to 33, 50 to 70, 82 to 102, 115 to 135, 161 to 181, 198 to 218, 263 to 283, 286 to 306, and 321 to 341; these read IIMI…IAYV, PNVV…KFVF, AVFL…WAVV, VGIL…IMGG, IGFV…TDIV, FLDW…ISAL, CALT…IWIL, VPGI…FAMV, and LGWK…AFVL.

Belongs to the complex I subunit 1 family. NDH-1 is composed of 14 different subunits. Subunits NuoA, H, J, K, L, M, N constitute the membrane sector of the complex.

The protein localises to the cell inner membrane. It carries out the reaction a quinone + NADH + 5 H(+)(in) = a quinol + NAD(+) + 4 H(+)(out). Functionally, NDH-1 shuttles electrons from NADH, via FMN and iron-sulfur (Fe-S) centers, to quinones in the respiratory chain. The immediate electron acceptor for the enzyme in this species is believed to be ubiquinone. Couples the redox reaction to proton translocation (for every two electrons transferred, four hydrogen ions are translocated across the cytoplasmic membrane), and thus conserves the redox energy in a proton gradient. This subunit may bind ubiquinone. The protein is NADH-quinone oxidoreductase subunit H 1 of Rhizobium etli (strain ATCC 51251 / DSM 11541 / JCM 21823 / NBRC 15573 / CFN 42).